The following is a 714-amino-acid chain: Phosphoribosylformylglycinamidine synthase subunit PurL (714 aa).

The active site involves H34. Y37 contributes to the ATP binding site. E78 is a binding site for Mg(2+). Substrate is bound by residues S79–H82 and R101. The active-site Proton acceptor is the H80. D102 contributes to the Mg(2+) binding site. Q226 is a substrate binding site. Mg(2+) is bound at residue D254. E298–Q300 serves as a coordination point for substrate. Positions 474 and 511 each coordinate ATP. Residue N512 participates in Mg(2+) binding. A substrate-binding site is contributed by S514.

The protein belongs to the FGAMS family. Monomer. Part of the FGAM synthase complex composed of 1 PurL, 1 PurQ and 2 PurS subunits.

It localises to the cytoplasm. The enzyme catalyses N(2)-formyl-N(1)-(5-phospho-beta-D-ribosyl)glycinamide + L-glutamine + ATP + H2O = 2-formamido-N(1)-(5-O-phospho-beta-D-ribosyl)acetamidine + L-glutamate + ADP + phosphate + H(+). It functions in the pathway purine metabolism; IMP biosynthesis via de novo pathway; 5-amino-1-(5-phospho-D-ribosyl)imidazole from N(2)-formyl-N(1)-(5-phospho-D-ribosyl)glycinamide: step 1/2. Part of the phosphoribosylformylglycinamidine synthase complex involved in the purines biosynthetic pathway. Catalyzes the ATP-dependent conversion of formylglycinamide ribonucleotide (FGAR) and glutamine to yield formylglycinamidine ribonucleotide (FGAM) and glutamate. The FGAM synthase complex is composed of three subunits. PurQ produces an ammonia molecule by converting glutamine to glutamate. PurL transfers the ammonia molecule to FGAR to form FGAM in an ATP-dependent manner. PurS interacts with PurQ and PurL and is thought to assist in the transfer of the ammonia molecule from PurQ to PurL. This Methanothermobacter marburgensis (strain ATCC BAA-927 / DSM 2133 / JCM 14651 / NBRC 100331 / OCM 82 / Marburg) (Methanobacterium thermoautotrophicum) protein is Phosphoribosylformylglycinamidine synthase subunit PurL.